Here is a 2545-residue protein sequence, read N- to C-terminus: Methylphloroacetophenone synthase (2545 aa).

The tract at residues 8–261 (AFGALAPWPA…HVAIHEGIPQ (254 aa)) is N-terminal acylcarrier protein transacylase (SAT) domain. Residues 383–798 (KDAIAIIGMG…GSNAAMIVLE (416 aa)) enclose the Ketosynthase family 3 (KS3) domain. Residues C547, H682, and H721 each act as for beta-ketoacyl synthase activity in the active site. The malonyl-CoA:ACP transacylase (MAT) domain stretch occupies residues 914–1218 (LCFGGQVSDR…VSLQLNKPNS (305 aa)). S1001 (for acyl/malonyl transferase activity) is an active-site residue. An N-terminal hotdog fold region spans residues 1293–1423 (LPAVLIRLKS…GTVNLKVADD (131 aa)). The PKS/mFAS DH domain maps to 1293-1605 (LPAVLIRLKS…FTDIRRPVPI (313 aa)). Residues 1296 to 1604 (VLIRLKSFDS…NFTDIRRPVP (309 aa)) are product template (PT) domain. The segment at 1449-1605 (RSESLRGNVL…FTDIRRPVPI (157 aa)) is C-terminal hotdog fold. The Carrier domain maps to 1657 to 1731 (TSIYEDICGL…SLVDYLHGKG (75 aa)). At S1691 the chain carries O-(pantetheine 4'-phosphoryl)serine. Over residues 1748–1768 (SSSHAISTGASSPPDSSGASA) the composition is skewed to low complexity. The tract at residues 1748–1773 (SSSHAISTGASSPPDSSGASAMTTPP) is disordered. The interval 1931 to 2163 (FGASETKLLN…GFKHVSWTDG (233 aa)) is methyltransferase (CMeT) domain. The interval 2198 to 2544 (AGVPMEEVVW…YDFICRQLGM (347 aa)) is claisen cyclase (CLC) domain. Active-site for thioesterase activity residues include S2321, D2481, and H2513.

In terms of biological role, methylphloroacetophenone synthase; part of the gene cluster that mediates the biosynthesis of usnic acid, a dibenzofuran lichen product possessing a broad spectrum of biological activities. Two genes, mpas and mpao, comprise the usnic acid biosynthetic gene cluster with a single post-PKS enzyme, the methylphloracetophenone oxidase (mpao). The methylphloroacetophenone synthase (mpas) is a non-reducing polyketide synthase that produces methylphloracetophenone from acetate via a methylated tetraketide intermediate. The methylphloroacetophenone oxidase then carries out the oxidative dimerization of methylphloracetophenone to usnic acid. The chain is Methylphloroacetophenone synthase from Cladonia uncialis (Cup lichen).